The chain runs to 421 residues: Serine--tRNA ligase (421 aa).

229 to 231 (TAE) lines the L-serine pocket. 260 to 262 (RAE) contributes to the ATP binding site. L-serine is bound at residue glutamate 283. An ATP-binding site is contributed by 347-350 (EISS). L-serine is bound at residue serine 383.

It belongs to the class-II aminoacyl-tRNA synthetase family. Type-1 seryl-tRNA synthetase subfamily. In terms of assembly, homodimer. The tRNA molecule binds across the dimer.

Its subcellular location is the cytoplasm. The enzyme catalyses tRNA(Ser) + L-serine + ATP = L-seryl-tRNA(Ser) + AMP + diphosphate + H(+). The catalysed reaction is tRNA(Sec) + L-serine + ATP = L-seryl-tRNA(Sec) + AMP + diphosphate + H(+). Its pathway is aminoacyl-tRNA biosynthesis; selenocysteinyl-tRNA(Sec) biosynthesis; L-seryl-tRNA(Sec) from L-serine and tRNA(Sec): step 1/1. Catalyzes the attachment of serine to tRNA(Ser). Is also able to aminoacylate tRNA(Sec) with serine, to form the misacylated tRNA L-seryl-tRNA(Sec), which will be further converted into selenocysteinyl-tRNA(Sec). The protein is Serine--tRNA ligase of Desulfitobacterium hafniense (strain Y51).